Here is a 140-residue protein sequence, read N- to C-terminus: Relaxin-3 (140 aa).

The signal sequence occupies residues 1–23; the sequence is MATRGLLLASWALLGALVLQAEA. 3 cysteine pairs are disulfide-bonded: Cys33-Cys127, Cys45-Cys140, and Cys126-Cys131. Residues 53–116 constitute a propeptide, connecting peptide; that stretch reads ADILAHDPLG…GSPGVVRGSR (64 aa).

It belongs to the insulin family. As to quaternary structure, heterodimer of a B chain and an A chain linked by two disulfide bonds. As to expression, highly abundant expression is detected in neurons within the ventomedial dorsal tegmental nucleus and the laterally central gray alpha of the pons. Also detected at much lower levels within the hippocampus.

The protein resides in the secreted. Its function is as follows. May play a role in neuropeptide signaling processes. Ligand for LGR7, relaxin-3 receptor-1 and relaxin-3 receptor-2. The protein is Relaxin-3 (Rln3) of Rattus norvegicus (Rat).